We begin with the raw amino-acid sequence, 482 residues long: Type II methyltransferase M.AvaI (482 aa).

It belongs to the N(4)/N(6)-methyltransferase family. N(4) subfamily.

The enzyme catalyses a 2'-deoxycytidine in DNA + S-adenosyl-L-methionine = an N(4)-methyl-2'-deoxycytidine in DNA + S-adenosyl-L-homocysteine + H(+). In terms of biological role, an alpha subtype methylase that recognizes the double-stranded sequence 5'-CYCGRG-3', methylates C-1 on both strands, and protects the DNA from cleavage by the AvaI endonuclease. The chain is Type II methyltransferase M.AvaI from Anabaena variabilis.